The chain runs to 448 residues: Bifunctional protein GlmU (448 aa).

A pyrophosphorylase region spans residues 1 to 232 (MSDRSLLVVV…ADEVAGVNSR (232 aa)). Residues 11–14 (LAAG), lysine 25, glutamine 78, and 83–84 (GT) contribute to the UDP-N-acetyl-alpha-D-glucosamine site. Residue aspartate 108 coordinates Mg(2+). Positions 144, 158, 173, and 230 each coordinate UDP-N-acetyl-alpha-D-glucosamine. Asparagine 230 is a Mg(2+) binding site. Residues 233–253 (VQLAEAEAILQRRLRLAAMAG) form a linker region. An N-acetyltransferase region spans residues 254–448 (GATLVAPETV…FRAARSKPKG (195 aa)). Positions 319 and 337 each coordinate UDP-N-acetyl-alpha-D-glucosamine. Histidine 349 acts as the Proton acceptor in catalysis. The UDP-N-acetyl-alpha-D-glucosamine site is built by tyrosine 352 and asparagine 363. Acetyl-CoA contacts are provided by residues alanine 366, 372 to 373 (NY), threonine 409, and arginine 426.

In the N-terminal section; belongs to the N-acetylglucosamine-1-phosphate uridyltransferase family. This sequence in the C-terminal section; belongs to the transferase hexapeptide repeat family. Homotrimer. The cofactor is Mg(2+).

It is found in the cytoplasm. The catalysed reaction is alpha-D-glucosamine 1-phosphate + acetyl-CoA = N-acetyl-alpha-D-glucosamine 1-phosphate + CoA + H(+). It carries out the reaction N-acetyl-alpha-D-glucosamine 1-phosphate + UTP + H(+) = UDP-N-acetyl-alpha-D-glucosamine + diphosphate. The protein operates within nucleotide-sugar biosynthesis; UDP-N-acetyl-alpha-D-glucosamine biosynthesis; N-acetyl-alpha-D-glucosamine 1-phosphate from alpha-D-glucosamine 6-phosphate (route II): step 2/2. Its pathway is nucleotide-sugar biosynthesis; UDP-N-acetyl-alpha-D-glucosamine biosynthesis; UDP-N-acetyl-alpha-D-glucosamine from N-acetyl-alpha-D-glucosamine 1-phosphate: step 1/1. It functions in the pathway bacterial outer membrane biogenesis; LPS lipid A biosynthesis. Catalyzes the last two sequential reactions in the de novo biosynthetic pathway for UDP-N-acetylglucosamine (UDP-GlcNAc). The C-terminal domain catalyzes the transfer of acetyl group from acetyl coenzyme A to glucosamine-1-phosphate (GlcN-1-P) to produce N-acetylglucosamine-1-phosphate (GlcNAc-1-P), which is converted into UDP-GlcNAc by the transfer of uridine 5-monophosphate (from uridine 5-triphosphate), a reaction catalyzed by the N-terminal domain. This is Bifunctional protein GlmU from Xanthobacter autotrophicus (strain ATCC BAA-1158 / Py2).